Here is a 710-residue protein sequence, read N- to C-terminus: Protein CNGC15a (710 aa).

A run of 6 helical transmembrane segments spans residues 85-105 (IFLA…YLPV), 115-135 (SIGL…FYII), 174-194 (LWSD…AVIP), 207-226 (VVRL…IYPL), 248-268 (YLTL…LLSI), and 368-388 (AEIN…ALLI). Residue 474-559 (LFDQMDDRML…WALDPRPTAV (86 aa)) participates in a nucleoside 3',5'-cyclic phosphate binding.

The protein belongs to the cyclic nucleotide-gated cation channel (TC 1.A.1.5) family. As to quaternary structure, interacts (via N-terminus) with DMI1 (via c-terminus). The Nod factor has no effect on this interaction, implying that the complex is maintained after activation. Expressed in roots, stems, leaves, flowers and pods.

The protein resides in the nucleus membrane. Its function is as follows. Cyclic nucleotide-gated channel involved in the establishment of both rhizobial and mycorrhizal associations. Required for full activation of nuclear-localized Ca(2+) oscillations by Nod and Myc factors. Simultaneous activation of the K(+)-permeable channel DMI1 and the Ca(2+) channel CNGC15 can give rise to sustained Ca(2+) oscillations. May function during fertilization in both female and male gametophytic Ca(2+) signaling. The protein is Protein CNGC15a of Medicago truncatula (Barrel medic).